The following is a 439-amino-acid chain: Xylose isomerase (439 aa).

Active-site residues include His-101 and Asp-104. Mg(2+) contacts are provided by Glu-232, Glu-268, His-271, Asp-296, Asp-307, Asp-309, and Asp-339.

The protein belongs to the xylose isomerase family. In terms of assembly, homotetramer. The cofactor is Mg(2+).

The protein resides in the cytoplasm. It carries out the reaction alpha-D-xylose = alpha-D-xylulofuranose. The chain is Xylose isomerase from Haemophilus influenzae (strain PittGG).